Reading from the N-terminus, the 308-residue chain is Ribonuclease HIII (308 aa).

The RNase H type-2 domain maps to Phe-88–Gln-304. A divalent metal cation-binding residues include Asp-94, Glu-95, and Asp-199.

Belongs to the RNase HII family. RnhC subfamily. Requires Mn(2+) as cofactor. Mg(2+) serves as cofactor.

Its subcellular location is the cytoplasm. The catalysed reaction is Endonucleolytic cleavage to 5'-phosphomonoester.. Its function is as follows. Endonuclease that specifically degrades the RNA of RNA-DNA hybrids. The protein is Ribonuclease HIII of Staphylococcus epidermidis (strain ATCC 12228 / FDA PCI 1200).